The chain runs to 282 residues: MSVRLSLPAPAKLNLFLHILGRRDDGYHELQTLFQFLDHGDELHFEARQDGQVRLHTEIAGVPHDSNLIVRAARGLQEASGSPQGVDIWLDKRLPMGGGIGGGSSDAATTLLALNHLWQLGWDEDRIAALGLRLGADVPVFTRGRAAFAEGVGEKLTPVDIPEPWYLVVVPQVLVSTAEIFSDPLLTRDSPAIKVRTVLEGDSRNDCQPVVERRYPEVRNALILLNKFVSARLTGTGGCVFGSFPNKAEADKVSALLPDHLQRFVAKGSNISMLHRKLETLV.

Residue lysine 12 is part of the active site. 95–105 (PMGGGIGGGSS) contributes to the ATP binding site. Residue aspartate 137 is part of the active site.

It belongs to the GHMP kinase family. IspE subfamily.

It catalyses the reaction 4-CDP-2-C-methyl-D-erythritol + ATP = 4-CDP-2-C-methyl-D-erythritol 2-phosphate + ADP + H(+). Its pathway is isoprenoid biosynthesis; isopentenyl diphosphate biosynthesis via DXP pathway; isopentenyl diphosphate from 1-deoxy-D-xylulose 5-phosphate: step 3/6. In terms of biological role, catalyzes the phosphorylation of the position 2 hydroxy group of 4-diphosphocytidyl-2C-methyl-D-erythritol. The sequence is that of 4-diphosphocytidyl-2-C-methyl-D-erythritol kinase from Pseudomonas aeruginosa (strain ATCC 15692 / DSM 22644 / CIP 104116 / JCM 14847 / LMG 12228 / 1C / PRS 101 / PAO1).